We begin with the raw amino-acid sequence, 158 residues long: UPF0178 protein RPA2191 (158 aa).

Belongs to the UPF0178 family.

The sequence is that of UPF0178 protein RPA2191 from Rhodopseudomonas palustris (strain ATCC BAA-98 / CGA009).